We begin with the raw amino-acid sequence, 635 residues long: Chaperone protein HtpG (635 aa).

Residues 1-337 (MELKMHNVQE…SPDLPLNISR (337 aa)) form an a; substrate-binding region. A b region spans residues 338-556 (ETLQNNRVVE…EGAMDLRMER (219 aa)). The segment at 557–635 (FLREQKQLNY…LNNLLGKISV (79 aa)) is c.

This sequence belongs to the heat shock protein 90 family. In terms of assembly, homodimer.

It is found in the cytoplasm. Its function is as follows. Molecular chaperone. Has ATPase activity. The protein is Chaperone protein HtpG of Wolbachia pipientis wMel.